The chain runs to 88 residues: Acylphosphatase (88 aa).

The 86-residue stretch at 3–88 (AVDVLISGRV…RAGHQGFEVR (86 aa)) folds into the Acylphosphatase-like domain. Active-site residues include Arg-18 and Asn-36.

Belongs to the acylphosphatase family.

It catalyses the reaction an acyl phosphate + H2O = a carboxylate + phosphate + H(+). This chain is Acylphosphatase (acyP), found in Methanocella arvoryzae (strain DSM 22066 / NBRC 105507 / MRE50).